The sequence spans 356 residues: MSTVTITDLARENVRNLTPYQSARRLGGNGDVWLNANEYPTAVEFQLTQQTLNRYPECQPKVVIENYAQYAGVKPEQVLVSRGADEGIELLIRAFCEPGKDAILYCPPTYGMYSVSAETIGVECRTVPTLDNWQLDLQGISDKLDGVKVVYVCSPNNPTGQLINPQDFRTLLELTRGKAIVVADEAYIEFCPQASLAGWLAEYPHLAILRTLSKAFALAGLRCGFTLANEEVINLLMKVIAPYPLSTPVADIAAQALSPQGIVAMRERVAQIITEREYLIAALKEIPCVEQVFDSETNYILARFKASSAVFKSLWDQGIILRDQNKQPSLSGCLRITVGTREESQCVIDALRAEQV.

Lys-214 is subject to N6-(pyridoxal phosphate)lysine.

The protein belongs to the class-II pyridoxal-phosphate-dependent aminotransferase family. Histidinol-phosphate aminotransferase subfamily. Homodimer. Pyridoxal 5'-phosphate is required as a cofactor.

The enzyme catalyses L-histidinol phosphate + 2-oxoglutarate = 3-(imidazol-4-yl)-2-oxopropyl phosphate + L-glutamate. It functions in the pathway amino-acid biosynthesis; L-histidine biosynthesis; L-histidine from 5-phospho-alpha-D-ribose 1-diphosphate: step 7/9. The sequence is that of Histidinol-phosphate aminotransferase from Escherichia coli O6:K15:H31 (strain 536 / UPEC).